The sequence spans 150 residues: Large ribosomal subunit protein bL9 (150 aa).

It belongs to the bacterial ribosomal protein bL9 family.

Binds to the 23S rRNA. In Stenotrophomonas maltophilia (strain R551-3), this protein is Large ribosomal subunit protein bL9.